Consider the following 432-residue polypeptide: Glutamate-1-semialdehyde 2,1-aminomutase (432 aa).

An N6-(pyridoxal phosphate)lysine modification is found at Lys272.

Belongs to the class-III pyridoxal-phosphate-dependent aminotransferase family. HemL subfamily. In terms of assembly, homodimer. It depends on pyridoxal 5'-phosphate as a cofactor.

It is found in the cytoplasm. It catalyses the reaction (S)-4-amino-5-oxopentanoate = 5-aminolevulinate. It participates in porphyrin-containing compound metabolism; protoporphyrin-IX biosynthesis; 5-aminolevulinate from L-glutamyl-tRNA(Glu): step 2/2. Its pathway is porphyrin-containing compound metabolism; chlorophyll biosynthesis. The chain is Glutamate-1-semialdehyde 2,1-aminomutase from Nostoc punctiforme (strain ATCC 29133 / PCC 73102).